Consider the following 160-residue polypeptide: MSDEEHHFESKADAGASKTFPQQAGTIRKNGYIVIKGRPCKVVEVSTSKTGKHGHAKCHFVAIDIFNGKKLEDIVPSSHNCDVPHVNRTDYQLIDISEDGFVSLLTESGNTKDDLRLPTDENLLKQVKDGFQEGKDLVVSVMSAMGEEQINAVKDVGTKN.

Residues 1–12 are compositionally biased toward basic and acidic residues; sequence MSDEEHHFESKA. A disordered region spans residues 1-21; that stretch reads MSDEEHHFESKADAGASKTFP. Hypusine is present on lysine 52.

Belongs to the eIF-5A family. Lys-52 undergoes hypusination, a unique post-translational modification that consists in the addition of a butylamino group from spermidine to lysine side chain, leading to the formation of the unusual amino acid hypusine. eIF-5As are the only known proteins to undergo this modification, which is essential for their function.

Functionally, translation factor that promotes translation elongation and termination, particularly upon ribosome stalling at specific amino acid sequence contexts. Binds between the exit (E) and peptidyl (P) site of the ribosome and promotes rescue of stalled ribosome: specifically required for efficient translation of polyproline-containing peptides as well as other motifs that stall the ribosome. Acts as a ribosome quality control (RQC) cofactor by joining the RQC complex to facilitate peptidyl transfer during CAT tailing step. This Solanum lycopersicum (Tomato) protein is Eukaryotic translation initiation factor 5A-2.